The sequence spans 273 residues: NADPH-dependent 7-cyano-7-deazaguanine reductase (273 aa).

A substrate-binding site is contributed by 81-83 (VES). 83 to 84 (SK) is an NADPH binding site. Catalysis depends on Cys179, which acts as the Thioimide intermediate. Asp186 functions as the Proton donor in the catalytic mechanism. 218 to 219 (AE) contacts substrate. NADPH is bound at residue 247–248 (RG).

This sequence belongs to the GTP cyclohydrolase I family. QueF type 2 subfamily. As to quaternary structure, homodimer.

Its subcellular location is the cytoplasm. The catalysed reaction is 7-aminomethyl-7-carbaguanine + 2 NADP(+) = 7-cyano-7-deazaguanine + 2 NADPH + 3 H(+). It participates in tRNA modification; tRNA-queuosine biosynthesis. Functionally, catalyzes the NADPH-dependent reduction of 7-cyano-7-deazaguanine (preQ0) to 7-aminomethyl-7-deazaguanine (preQ1). The chain is NADPH-dependent 7-cyano-7-deazaguanine reductase from Rickettsia canadensis (strain McKiel).